The primary structure comprises 104 residues: Large ribosomal subunit protein uL24 (104 aa).

Belongs to the universal ribosomal protein uL24 family. Part of the 50S ribosomal subunit.

Functionally, one of two assembly initiator proteins, it binds directly to the 5'-end of the 23S rRNA, where it nucleates assembly of the 50S subunit. Its function is as follows. One of the proteins that surrounds the polypeptide exit tunnel on the outside of the subunit. The chain is Large ribosomal subunit protein uL24 from Clostridium botulinum (strain Alaska E43 / Type E3).